The sequence spans 31 residues: Relaxin B chain (31 aa).

Residue Q1 is modified to Pyrrolidone carboxylic acid.

The protein belongs to the insulin family. Heterodimer of a B chain and an A chain linked by two disulfide bonds.

The protein resides in the secreted. Functionally, relaxin is an ovarian hormone that acts with estrogen to produce dilatation of the birth canal in many mammals. The chain is Relaxin B chain from Phocoenoides dalli dalli (Dall's porpoise).